Consider the following 252-residue polypeptide: Flagellar L-ring protein (252 aa).

Residues 1 to 25 form the signal peptide; that stretch reads MLKLASLNRIVLTGTLLAAAGLASG. A lipid anchor (N-palmitoyl cysteine) is attached at Cys26. A lipid anchor (S-diacylglycerol cysteine) is attached at Cys26.

This sequence belongs to the FlgH family. The basal body constitutes a major portion of the flagellar organelle and consists of four rings (L,P,S, and M) mounted on a central rod.

The protein resides in the cell outer membrane. Its subcellular location is the bacterial flagellum basal body. In terms of biological role, assembles around the rod to form the L-ring and probably protects the motor/basal body from shearing forces during rotation. In Nitrobacter winogradskyi (strain ATCC 25391 / DSM 10237 / CIP 104748 / NCIMB 11846 / Nb-255), this protein is Flagellar L-ring protein.